The following is a 193-amino-acid chain: Rho-related GTP-binding protein RhoA-B (193 aa).

Residues 12–19 (GDGACGKT), 30–37 (FPEVYVPT), 59–63 (DTAGQ), 117–120 (NKKD), and 160–162 (SAK) contribute to the GTP site. A glycan ((Microbial infection) O-linked (GlcNAc) tyrosine; by Yersinia Afp18) is linked at Tyr34. At Cys190 the chain carries Cysteine methyl ester. Cys190 carries S-geranylgeranyl cysteine lipidation. Residues 191–193 (CLL) constitute a propeptide, removed in mature form.

It belongs to the small GTPase superfamily. Rho family. In terms of processing, (Microbial infection) Glycosylated at Tyr-34 by Yersinia ruckeri toxin Afp18. Mono-O-GlcNAcylation by Afp18 inhibits RhoA activation by guanine nucleotide exchange factors and blocks RhoA signaling.

It localises to the cell membrane. In terms of biological role, regulates a signal transduction pathway linking plasma membrane receptors to the assembly of focal adhesions and actin stress fibers. In Danio rerio (Zebrafish), this protein is Rho-related GTP-binding protein RhoA-B.